Reading from the N-terminus, the 315-residue chain is Ribose-phosphate pyrophosphokinase (315 aa).

Residues 37 to 39 (DGE) and 96 to 97 (RQ) contribute to the ATP site. Mg(2+) is bound by residues H131 and D170. Residue K194 is part of the active site. Residues R196, D220, and 224–228 (DTGGT) contribute to the D-ribose 5-phosphate site.

The protein belongs to the ribose-phosphate pyrophosphokinase family. Class I subfamily. Homohexamer. Requires Mg(2+) as cofactor.

Its subcellular location is the cytoplasm. The enzyme catalyses D-ribose 5-phosphate + ATP = 5-phospho-alpha-D-ribose 1-diphosphate + AMP + H(+). It functions in the pathway metabolic intermediate biosynthesis; 5-phospho-alpha-D-ribose 1-diphosphate biosynthesis; 5-phospho-alpha-D-ribose 1-diphosphate from D-ribose 5-phosphate (route I): step 1/1. In terms of biological role, involved in the biosynthesis of the central metabolite phospho-alpha-D-ribosyl-1-pyrophosphate (PRPP) via the transfer of pyrophosphoryl group from ATP to 1-hydroxyl of ribose-5-phosphate (Rib-5-P). This is Ribose-phosphate pyrophosphokinase from Buchnera aphidicola subsp. Acyrthosiphon pisum (strain APS) (Acyrthosiphon pisum symbiotic bacterium).